The following is a 635-amino-acid chain: Threonine--tRNA ligase (635 aa).

In terms of domain architecture, TGS spans 1–61 (MIAITLPDGS…EQNVDLAIVT (61 aa)). Residues 242-533 (DHRKLGKLLD…LLENHAGALP (292 aa)) are catalytic. The Zn(2+) site is built by C333, H384, and H510.

It belongs to the class-II aminoacyl-tRNA synthetase family. As to quaternary structure, homodimer. Requires Zn(2+) as cofactor.

It localises to the cytoplasm. The enzyme catalyses tRNA(Thr) + L-threonine + ATP = L-threonyl-tRNA(Thr) + AMP + diphosphate + H(+). Its function is as follows. Catalyzes the attachment of threonine to tRNA(Thr) in a two-step reaction: L-threonine is first activated by ATP to form Thr-AMP and then transferred to the acceptor end of tRNA(Thr). Also edits incorrectly charged L-seryl-tRNA(Thr). The sequence is that of Threonine--tRNA ligase from Ralstonia nicotianae (strain ATCC BAA-1114 / GMI1000) (Ralstonia solanacearum).